The sequence spans 245 residues: MIIPAIDLIEGQVVRLYQGDYAQQTTFDLSPLAQLQAYQAQGATWLHIVDLTGAKDPDRRQTRLIGELVENLEANIQVGGGIRSEAQVKELLDLGVKRVVIGSLAVKQPELVQSWLETYGSDAICLALDVNINQAGEKIVAVSGWQSGGGKTLESLVATFAPYGLKHALVTDISRDGTLQGSNTQLYQEIVARYPDIEWQASGGIATLDDVSAVRNSGASGIIIGKALLINNFTVQEAIACWPNA.

The active-site Proton acceptor is the D7. The active-site Proton donor is the D129.

It belongs to the HisA/HisF family.

The protein localises to the cytoplasm. It carries out the reaction 1-(5-phospho-beta-D-ribosyl)-5-[(5-phospho-beta-D-ribosylamino)methylideneamino]imidazole-4-carboxamide = 5-[(5-phospho-1-deoxy-D-ribulos-1-ylimino)methylamino]-1-(5-phospho-beta-D-ribosyl)imidazole-4-carboxamide. The protein operates within amino-acid biosynthesis; L-histidine biosynthesis; L-histidine from 5-phospho-alpha-D-ribose 1-diphosphate: step 4/9. The polypeptide is 1-(5-phosphoribosyl)-5-[(5-phosphoribosylamino)methylideneamino] imidazole-4-carboxamide isomerase (Shewanella loihica (strain ATCC BAA-1088 / PV-4)).